A 295-amino-acid chain; its full sequence is Inward rectifier potassium channel Kirbac3.1 (295 aa).

The Cytoplasmic portion of the chain corresponds to 1–47; sequence MTGGMKPPARKPRILNSDGSSNITRLGLEKRGWLDDHYHDLLTVSWP. The chain crosses the membrane as a helical span at residues 48-69; it reads VFITLITGLYLVTNALFALAYL. At 70–82 the chain is on the extracellular side; that stretch reads ACGDVIENARPGS. The helical; Pore-forming intramembrane region spans 83–95; the sequence is FTDAFFFSVQTMA. A Selectivity filter motif is present at residues 96–100; sequence TIGYG. A helical membrane pass occupies residues 107–131; sequence PLANTLVTLEALCGMLGLAVAASLI. Residues 132 to 295 lie on the Cytoplasmic side of the membrane; sequence YARFTRPTAG…DLGKFHEIAQ (164 aa).

This sequence belongs to the inward rectifier-type potassium channel (TC 1.A.2.1) family. KCNJ11 subfamily. As to quaternary structure, homotetramer.

It localises to the membrane. Inward rectifier potassium channel that mediates potassium uptake into the cell. Inward rectifier potassium channels are characterized by a greater tendency to allow potassium to flow into the cell rather than out of it. The inward rectification may be achieved by the blockage of outward current by cytoplasmic divalent metal ions and polyamines. Complements an E.coli mutant that is defective in K(+) uptake. The protein is Inward rectifier potassium channel Kirbac3.1 of Paramagnetospirillum magnetotacticum (Aquaspirillum magnetotacticum).